A 364-amino-acid chain; its full sequence is Mannose-1-phosphate guanyltransferase (364 aa).

It belongs to the transferase hexapeptide repeat family.

The protein resides in the cytoplasm. It carries out the reaction alpha-D-mannose 1-phosphate + GTP + H(+) = GDP-alpha-D-mannose + diphosphate. It functions in the pathway nucleotide-sugar biosynthesis; GDP-alpha-D-mannose biosynthesis; GDP-alpha-D-mannose from alpha-D-mannose 1-phosphate (GTP route): step 1/1. Functionally, involved in cell wall synthesis where it is required for glycosylation. Involved in cell cycle progression through cell-size checkpoint. The protein is Mannose-1-phosphate guanyltransferase (mpg1) of Aspergillus fumigatus (strain ATCC MYA-4609 / CBS 101355 / FGSC A1100 / Af293) (Neosartorya fumigata).